Consider the following 280-residue polypeptide: Urease accessory protein UreD 1 (280 aa).

Belongs to the UreD family. As to quaternary structure, ureD, UreF and UreG form a complex that acts as a GTP-hydrolysis-dependent molecular chaperone, activating the urease apoprotein by helping to assemble the nickel containing metallocenter of UreC. The UreE protein probably delivers the nickel.

Its subcellular location is the cytoplasm. In terms of biological role, required for maturation of urease via the functional incorporation of the urease nickel metallocenter. This is Urease accessory protein UreD 1 from Brucella melitensis biotype 1 (strain ATCC 23456 / CCUG 17765 / NCTC 10094 / 16M).